Consider the following 336-residue polypeptide: Protein FPV127 (336 aa).

The interval 1 to 22 is disordered; the sequence is MGGGLVLPTRDPPKEQDTSETA.

This sequence belongs to the poxviruses A16/G9/J5 family.

The polypeptide is Protein FPV127 (Vertebrata (FPV)).